The following is a 267-amino-acid chain: Hydroxyethylthiazole kinase (267 aa).

Met-46 is a substrate binding site. ATP contacts are provided by Arg-121 and Thr-167. Ala-194 lines the substrate pocket.

The protein belongs to the Thz kinase family. Mg(2+) serves as cofactor.

It catalyses the reaction 5-(2-hydroxyethyl)-4-methylthiazole + ATP = 4-methyl-5-(2-phosphooxyethyl)-thiazole + ADP + H(+). It participates in cofactor biosynthesis; thiamine diphosphate biosynthesis; 4-methyl-5-(2-phosphoethyl)-thiazole from 5-(2-hydroxyethyl)-4-methylthiazole: step 1/1. Functionally, catalyzes the phosphorylation of the hydroxyl group of 4-methyl-5-beta-hydroxyethylthiazole (THZ). The sequence is that of Hydroxyethylthiazole kinase from Rhizobium johnstonii (strain DSM 114642 / LMG 32736 / 3841) (Rhizobium leguminosarum bv. viciae).